A 1036-amino-acid chain; its full sequence is Non-canonical non-ribosomal peptide synthetase FUB8 (1036 aa).

The tract at residues 21-343 (EIARDEPDRV…LASVVTHPDE (323 aa)) is adenylation (A) domain. A Carrier domain is found at 544 to 621 (TTEDVVRSGI…QLAHTVWSHL (78 aa)). Ser-579 carries the O-(pantetheine 4'-phosphoryl)serine modification. Positions 658 to 899 (LTGTTGEIGS…IPIDLLTEVI (242 aa)) are thioester reductase (TR) domain.

Its pathway is mycotoxin biosynthesis. Non-canonical non-ribosomal peptide synthetase; part of the gene cluster that mediates the biosynthesis of fusaric acid, a mycotoxin with low to moderate toxicity to animals and humans, but with high phytotoxic properties. L-aspartate is suggested as fusaric acid amino acid precursor that is activated and further processed to O-acetyl-L-homoserine by cluster enzymes aspartate kinase FUB3 and homoserine O-acetyltransferase FUB5, as well as enzymes of the primary metabolism. The polyketide synthase (PKS) FUB1 generates the triketide trans-2-hexenal which is presumptively released by the hydrolase FUB4 and linked to the NRPS-bound amino acid precursor by NAD(P)-dependent dehydrogenase FUB6. FUB1, FUB4, and the non-canonical NRPS Fub8 may form an enzyme complex. Further processing of the NRPS-bound intermediate might be carried out by FUB6 and the sulfhydrylase FUB7, enabling a spontaneous electrocyclization to close the carbon backbone of fusaric acid. Dihydrofusaric acid is likely to be released via reduction by the thioester reductase (TR) domain of FUB8 whereupon the final oxidation to fusaric acid may (also) be performed by the FMN-dependent dehydrogenase FUB9. This is Non-canonical non-ribosomal peptide synthetase FUB8 from Fusarium oxysporum f. sp. lycopersici (strain 4287 / CBS 123668 / FGSC 9935 / NRRL 34936) (Fusarium vascular wilt of tomato).